Consider the following 546-residue polypeptide: 2-isopropylmalate synthase (546 aa).

Positions 8–271 (ILIFDTTLRD…NSFFKRNPDS (264 aa)) constitute a Pyruvate carboxyltransferase domain. Mn(2+)-binding residues include Asp17, His208, His210, and Asn244. The regulatory domain stretch occupies residues 408-546 (QLSLVQVSCG…TNTFLSNNAN (139 aa)).

Belongs to the alpha-IPM synthase/homocitrate synthase family. LeuA type 1 subfamily. As to quaternary structure, homodimer. Mn(2+) serves as cofactor.

Its subcellular location is the cytoplasm. It carries out the reaction 3-methyl-2-oxobutanoate + acetyl-CoA + H2O = (2S)-2-isopropylmalate + CoA + H(+). It functions in the pathway amino-acid biosynthesis; L-leucine biosynthesis; L-leucine from 3-methyl-2-oxobutanoate: step 1/4. Its function is as follows. Catalyzes the condensation of the acetyl group of acetyl-CoA with 3-methyl-2-oxobutanoate (2-ketoisovalerate) to form 3-carboxy-3-hydroxy-4-methylpentanoate (2-isopropylmalate). The sequence is that of 2-isopropylmalate synthase from Prochlorococcus marinus (strain AS9601).